Reading from the N-terminus, the 156-residue chain is DNA mismatch endonuclease Vsr (156 aa).

Mg(2+) contacts are provided by D51 and T63.

This sequence belongs to the Vsr family. It depends on Mg(2+) as a cofactor. Requires Zn(2+) as cofactor.

Deamination of 5-methylcytosine in DNA results in T/G mismatches. If unrepaired, these mismatches can lead to C-to-T transition mutations. The very short patch (VSP) repair process in E.coli counteracts the mutagenic process by repairing the mismatches in favor of the G-containing strand. This enzyme is an endonuclease that nicks double-stranded DNA within the sequence CT(AT)GN or NT(AT)GG next to the thymidine residue that is mismatched to 2'-deoxyguanosine. The incision is mismatch-dependent and strand-specific. The protein is DNA mismatch endonuclease Vsr of Escherichia coli (strain K12).